The chain runs to 310 residues: Oxygen-dependent coproporphyrinogen-III oxidase (310 aa).

S97 is a binding site for substrate. 2 residues coordinate a divalent metal cation: H101 and H111. The active-site Proton donor is H111. 113–115 (NFR) contributes to the substrate binding site. Positions 150 and 180 each coordinate a divalent metal cation. An important for dimerization region spans residues 245–280 (YVEFNLLYDRGTRFGLEFGGRTESILMSLPPRVVWR). Substrate is bound at residue 263-265 (GGR).

The protein belongs to the aerobic coproporphyrinogen-III oxidase family. Homodimer. The cofactor is a divalent metal cation.

It localises to the cytoplasm. The catalysed reaction is coproporphyrinogen III + O2 + 2 H(+) = protoporphyrinogen IX + 2 CO2 + 2 H2O. Its pathway is porphyrin-containing compound metabolism; protoporphyrin-IX biosynthesis; protoporphyrinogen-IX from coproporphyrinogen-III (O2 route): step 1/1. In terms of biological role, involved in the heme biosynthesis. Catalyzes the aerobic oxidative decarboxylation of propionate groups of rings A and B of coproporphyrinogen-III to yield the vinyl groups in protoporphyrinogen-IX. The sequence is that of Oxygen-dependent coproporphyrinogen-III oxidase from Coxiella burnetii (strain RSA 331 / Henzerling II).